The following is a 200-amino-acid chain: Holliday junction branch migration complex subunit RuvA (200 aa).

Residues 1 to 64 are domain I; sequence MIGHLRGIIV…EDAHTLYGFH (64 aa). The interval 65–143 is domain II; it reads NDHERRLFRA…RWHTNDTPSP (79 aa). Positions 133–152 are disordered; sequence SRWHTNDTPSPEGLRSSNTQ. The interval 144–148 is flexible linker; sequence EGLRS. The segment at 149-200 is domain III; it reads SNTQPTQDAISALMALGYKPQEAKRAIDAIQKPDLSAETLIRLALKQMVLGT.

Belongs to the RuvA family. In terms of assembly, homotetramer. Forms an RuvA(8)-RuvB(12)-Holliday junction (HJ) complex. HJ DNA is sandwiched between 2 RuvA tetramers; dsDNA enters through RuvA and exits via RuvB. An RuvB hexamer assembles on each DNA strand where it exits the tetramer. Each RuvB hexamer is contacted by two RuvA subunits (via domain III) on 2 adjacent RuvB subunits; this complex drives branch migration. In the full resolvosome a probable DNA-RuvA(4)-RuvB(12)-RuvC(2) complex forms which resolves the HJ.

The protein localises to the cytoplasm. The RuvA-RuvB-RuvC complex processes Holliday junction (HJ) DNA during genetic recombination and DNA repair, while the RuvA-RuvB complex plays an important role in the rescue of blocked DNA replication forks via replication fork reversal (RFR). RuvA specifically binds to HJ cruciform DNA, conferring on it an open structure. The RuvB hexamer acts as an ATP-dependent pump, pulling dsDNA into and through the RuvAB complex. HJ branch migration allows RuvC to scan DNA until it finds its consensus sequence, where it cleaves and resolves the cruciform DNA. In Coxiella burnetii (strain CbuK_Q154) (Coxiella burnetii (strain Q154)), this protein is Holliday junction branch migration complex subunit RuvA.